Consider the following 388-residue polypeptide: 8-amino-7-oxononanoate synthase (388 aa).

Substrate is bound at residue Arg20. 107–108 (GY) is a binding site for pyridoxal 5'-phosphate. His132 contacts substrate. Residues Ser178, His206, and Thr237 each coordinate pyridoxal 5'-phosphate. Lys240 bears the N6-(pyridoxal phosphate)lysine mark. Substrate is bound at residue Thr356.

The protein belongs to the class-II pyridoxal-phosphate-dependent aminotransferase family. BioF subfamily. In terms of assembly, homodimer. Pyridoxal 5'-phosphate is required as a cofactor.

The catalysed reaction is 6-carboxyhexanoyl-[ACP] + L-alanine + H(+) = (8S)-8-amino-7-oxononanoate + holo-[ACP] + CO2. It participates in cofactor biosynthesis; biotin biosynthesis. Its function is as follows. Catalyzes the decarboxylative condensation of pimeloyl-[acyl-carrier protein] and L-alanine to produce 8-amino-7-oxononanoate (AON), [acyl-carrier protein], and carbon dioxide. The sequence is that of 8-amino-7-oxononanoate synthase from Herminiimonas arsenicoxydans.